The sequence spans 631 residues: Phosphomethylpyrimidine synthase (631 aa).

Substrate-binding positions include Asn239, Met268, Tyr297, His333, 353–355 (SRG), 394–397 (DGLR), and Glu433. Position 437 (His437) interacts with Zn(2+). A substrate-binding site is contributed by Tyr460. A Zn(2+)-binding site is contributed by His501. Residues Cys581, Cys584, and Cys589 each coordinate [4Fe-4S] cluster.

Belongs to the ThiC family. Homodimer. It depends on [4Fe-4S] cluster as a cofactor.

The catalysed reaction is 5-amino-1-(5-phospho-beta-D-ribosyl)imidazole + S-adenosyl-L-methionine = 4-amino-2-methyl-5-(phosphooxymethyl)pyrimidine + CO + 5'-deoxyadenosine + formate + L-methionine + 3 H(+). The protein operates within cofactor biosynthesis; thiamine diphosphate biosynthesis. Functionally, catalyzes the synthesis of the hydroxymethylpyrimidine phosphate (HMP-P) moiety of thiamine from aminoimidazole ribotide (AIR) in a radical S-adenosyl-L-methionine (SAM)-dependent reaction. This Escherichia coli O6:H1 (strain CFT073 / ATCC 700928 / UPEC) protein is Phosphomethylpyrimidine synthase.